The chain runs to 522 residues: Target of rapamycin complex 2 subunit MAPKAP1 (522 aa).

At A2 the chain carries N-acetylalanine. An interaction with MAP3K2 region spans residues 2-184; sequence AFLDNPTIIL…KKIDVYLPLH (183 aa). An interaction with NBN region spans residues 2–267; the sequence is AFLDNPTIIL…GFSTLALVEK (266 aa). T86 is modified (phosphothreonine). Phosphoserine is present on residues S128, S186, S315, and S356. The region spanning 139–267 is the CRIM domain; that stretch reads QSILSVRLEQ…GFSTLALVEK (129 aa). The tract at residues 279–353 is SIN1-type RBD; sequence LFVRINAAHG…QSAWEFCQVR (75 aa). In terms of domain architecture, SIN1-type PH spans 382–487; the sequence is HYKSFKVSMI…IVLKVNYILE (106 aa). Position 393 (R393) interacts with a 1,2-diacyl-sn-glycero-3-phospho-(1D-myo-inositol-3,4,5-trisphosphate). Position 398 is a phosphothreonine (T398). Residues K428 and K464 each coordinate a 1,2-diacyl-sn-glycero-3-phospho-(1D-myo-inositol-3,4,5-trisphosphate). Residues 468–522 are interaction with ATF2; sequence FESDAATVNEIVLKVNYILESRASTARADYFAQKQRKLNRRTSFSFQKEKKSGQQ. The residue at position 510 (S510) is a Phosphoserine.

It belongs to the SIN1 family. Component of the mechanistic target of rapamycin complex 2 (mTORC2), consisting in two heterotretramers composed of MTOR, MLST8, RICTOR and MAPKAP1/SIN1. The mTORC2 core complex associates with PRR5/PROTOR1 and/or PRR5L/PROTOR2. Contrary to mTORC1, mTORC2 does not bind to and is not sensitive to FKBP12-rapamycin. Interacts with MAP3K2. Interacts with ATF2. Interacts with MAPK8. Interacts with GTP-bound HRAS and KRAS; inhibiting their activity. Interacts with IFNAR2. Post-translationally, phosphorylation at Ser-128 by PKC promotes relocalization to the perinuclear region, where the mTORC2 complex specifically mediates phosphorylation of SGK1. Phosphorylated at Thr-86 by AKT1 or RPS6KB1 in the presence of growth factors; the effect of this phosphorylation is however unclear. According to two studies, phosphorylation at Thr-86 by AKT1 is part of a positive feedback loop that increases mTORC2 activation. According to another study, phosphorylation at Thr-86 and Thr-398 by RPS6KB1 promotes dissociation from the mTORC2 complex, leading to inhibit mTORC2 signaling.

The protein localises to the cell membrane. It localises to the endoplasmic reticulum membrane. It is found in the early endosome membrane. The protein resides in the late endosome membrane. Its subcellular location is the lysosome membrane. The protein localises to the golgi apparatus membrane. It localises to the mitochondrion outer membrane. It is found in the cytoplasm. The protein resides in the perinuclear region. Its subcellular location is the nucleus. With respect to regulation, phosphatidylinositol 3,4,5-trisphosphate (PI(3,4,5)P3) promotes MTOR activation by relieving MAPKAP1/SIN1-mediated inhibition of MTOR that takes place in absence of PI(3,4,5)P3. In terms of biological role, component of the mechanistic target of rapamycin complex 2 (mTORC2), which transduces signals from growth factors to pathways involved in proliferation, cytoskeletal organization, lipogenesis and anabolic output. In response to growth factors, mTORC2 phosphorylates and activates AGC protein kinase family members, including AKT (AKT1, AKT2 and AKT3), PKC (PRKCA, PRKCB and PRKCE) and SGK1. In contrast to mTORC1, mTORC2 is nutrient-insensitive. Within the mTORC2 complex, MAPKAP1/SIN1 acts as a substrate adapter which recognizes and binds AGC protein kinase family members for phosphorylation by MTOR. mTORC2 plays a critical role in AKT1 activation by mediating phosphorylation of different sites depending on the context, such as 'Thr-450', 'Ser-473', 'Ser-477' or 'Thr-479', facilitating the phosphorylation of the activation loop of AKT1 on 'Thr-308' by PDPK1/PDK1 which is a prerequisite for full activation. mTORC2 catalyzes the phosphorylation of SGK1 at 'Ser-422' and of PRKCA on 'Ser-657'. The mTORC2 complex also phosphorylates various proteins involved in insulin signaling, such as FBXW8 and IGF2BP1. mTORC2 acts upstream of Rho GTPases to regulate the actin cytoskeleton, probably by activating one or more Rho-type guanine nucleotide exchange factors. mTORC2 promotes the serum-induced formation of stress-fibers or F-actin. MAPKAP1 inhibits MAP3K2 by preventing its dimerization and autophosphorylation. Inhibits HRAS and KRAS independently of mTORC2 complex. Enhances osmotic stress-induced phosphorylation of ATF2 and ATF2-mediated transcription. Involved in ciliogenesis, regulates cilia length through its interaction with CCDC28B independently of mTORC2 complex. The protein is Target of rapamycin complex 2 subunit MAPKAP1 (MAPKAP1) of Pongo abelii (Sumatran orangutan).